We begin with the raw amino-acid sequence, 393 residues long: MQTSHYAAEKDMQDAAPRLTFTLRDEERLMMKIGVFVPIGNNGWLISTHAPQYMPTFELNKAIVQKAEHYHFDFALSMIKLRGFGGKTEFWDHNLESFTLMAGLAAVTSRIQIYATAATLTLPPAIVARMAATIDSISGGRFGVNLVTGWQKPEYEQMGIWPGDDYFSRRYDYLTEYVQVLRDLWGSGKSDFKGDFFTMDDCRVSPQPSVPMKVICAGQSDAGMAFSARYADFNFCFGKGVNTPTAFAPTAARMKQAAEQTGRDVGSYVLFMVIADETDDAARAKWEHYKAGADEEALSWLTEQSQKDTRSGTDTNVRQMADPTSAVNINMGTLVGSYASVARMLDEVANVPGAEGVLLTFDDFLSGIETFGERIQPLMLCRAHLPALTQEVA.

Residues 79 to 80 (IK), asparagine 145, glutamate 154, 170 to 171 (RY), and serine 220 contribute to the FMN site.

The protein belongs to the NtaA/SnaA/DszA monooxygenase family. RutA subfamily.

The enzyme catalyses uracil + FMNH2 + NADH + O2 = (Z)-3-ureidoacrylate + FMN + NAD(+) + H2O + H(+). It carries out the reaction thymine + FMNH2 + NADH + O2 = (Z)-2-methylureidoacrylate + FMN + NAD(+) + H2O + H(+). Functionally, catalyzes the pyrimidine ring opening between N-3 and C-4 by an unusual flavin hydroperoxide-catalyzed mechanism, adding oxygen atoms in the process to yield ureidoacrylate peracid, that immediately reacts with FMN forming ureidoacrylate and FMN-N(5)-oxide. The FMN-N(5)-oxide reacts spontaneously with NADH to produce FMN. Requires the flavin reductase RutF to regenerate FMN in vivo. The chain is Pyrimidine monooxygenase RutA from Escherichia coli O6:H1 (strain CFT073 / ATCC 700928 / UPEC).